Here is a 287-residue protein sequence, read N- to C-terminus: Glucose uptake protein GlcU (287 aa).

8 consecutive transmembrane segments (helical) span residues 4 to 26 (LLAL…LGGG), 38 to 60 (ALIV…IFIV), 110 to 132 (WSTP…GIIL), 153 to 175 (ILIL…LFNV), 180 to 197 (ALLP…VLTY), 210 to 227 (ILPG…FISQ), 232 to 254 (VATS…IFIL), and 261 to 283 (RQLI…LGIA).

The protein belongs to the GRP transporter (TC 2.A.7.5) family.

The protein localises to the cell membrane. In terms of biological role, involved in the uptake of glucose. This chain is Glucose uptake protein GlcU (glcU), found in Bacillus subtilis (strain 168).